Reading from the N-terminus, the 972-residue chain is RNA polymerase-associated protein RapA (972 aa).

Residues 164–334 (EVGRRYAPRV…FARLRLLDPD (171 aa)) form the Helicase ATP-binding domain. 177-184 (DEVGLGKT) provides a ligand contact to ATP. A DEAH box motif is present at residues 280-283 (DEAH). A Helicase C-terminal domain is found at 493 to 671 (RVNWLLEMLK…HEPEALENLI (179 aa)).

This sequence belongs to the SNF2/RAD54 helicase family. RapA subfamily. Interacts with the RNAP. Has a higher affinity for the core RNAP than for the holoenzyme. Its ATPase activity is stimulated by binding to RNAP.

Transcription regulator that activates transcription by stimulating RNA polymerase (RNAP) recycling in case of stress conditions such as supercoiled DNA or high salt concentrations. Probably acts by releasing the RNAP, when it is trapped or immobilized on tightly supercoiled DNA. Does not activate transcription on linear DNA. Probably not involved in DNA repair. The protein is RNA polymerase-associated protein RapA of Photobacterium profundum (strain SS9).